The primary structure comprises 310 residues: D-apiose import binding protein (310 aa).

The signal sequence occupies residues 1–21 (MKLLKASLVALSLAASTFVYA). D-apiofuranose contacts are provided by residues Asn-35, 111-112 (DR), 158-160 (DTN), Arg-164, Asn-214, Asp-239, and Gln-260.

Belongs to the bacterial solute-binding protein 2 family.

The protein localises to the periplasm. Functionally, part of an ABC transporter complex involved in D-apiose import. Binds D-apiose, D-ribose and D-ribulose. In Actinobacillus succinogenes (strain ATCC 55618 / DSM 22257 / CCUG 43843 / 130Z), this protein is D-apiose import binding protein.